The primary structure comprises 427 residues: Trigger factor (427 aa).

Positions 163-248 (GDTVVIDFVG…IHEVKTKEVP (86 aa)) constitute a PPIase FKBP-type domain.

It belongs to the FKBP-type PPIase family. Tig subfamily.

The protein resides in the cytoplasm. It catalyses the reaction [protein]-peptidylproline (omega=180) = [protein]-peptidylproline (omega=0). Involved in protein export. Acts as a chaperone by maintaining the newly synthesized protein in an open conformation. Functions as a peptidyl-prolyl cis-trans isomerase. This chain is Trigger factor, found in Streptococcus agalactiae serotype III (strain NEM316).